We begin with the raw amino-acid sequence, 475 residues long: Phenolic acid decarboxylase (475 aa).

The Mn(2+) site is built by Asn-161, His-183, and Glu-225. Prenylated FMN contacts are provided by residues 161 to 166 (NVGIYR) and 182 to 183 (MH). Catalysis depends on Glu-274, which acts as the Proton donor.

This sequence belongs to the UbiD family. YclC subfamily. Prenylated FMN is required as a cofactor. Mn(2+) serves as cofactor.

The catalysed reaction is 4-hydroxybenzoate + H(+) = phenol + CO2. The enzyme catalyses vanillate + H(+) = guaiacol + CO2. Its function is as follows. Involved in the non-oxidative decarboxylation and detoxification of phenolic derivatives under both aerobic and anaerobic conditions. Phenolic acid decarboxylase that catalyzes the reversible decarboxylation of 4-hydroxybenzoate and vanillate. This chain is Phenolic acid decarboxylase, found in Escherichia coli O157:H7.